An 80-amino-acid polypeptide reads, in one-letter code: Clavanin-E (80 aa).

Positions 1–19 (MKTTILILLILGLGINAKS) are cleaved as a signal peptide. Residues 20 to 29 (LEERKSEEEK) constitute a propeptide that is removed on maturation. A Phenylalanine amide modification is found at Phe52. Residues 54 to 80 (DDQQDNGKFYGYYAEDNGKHWYDTGDQ) constitute a propeptide that is removed on maturation.

The protein resides in the secreted. Functionally, has antimicrobial activity. The chain is Clavanin-E from Styela clava (Sea squirt).